A 304-amino-acid chain; its full sequence is Acetaldehyde dehydrogenase (304 aa).

The active-site Acyl-thioester intermediate is the cysteine 131. NAD(+)-binding positions include 162-170 and asparagine 273; that span reads SAGPGTRKN.

It belongs to the acetaldehyde dehydrogenase family.

It catalyses the reaction acetaldehyde + NAD(+) + CoA = acetyl-CoA + NADH + H(+). This is Acetaldehyde dehydrogenase from Polaromonas naphthalenivorans (strain CJ2).